A 351-amino-acid chain; its full sequence is Alternative oxidase, mitochondrial (351 aa).

A helical transmembrane segment spans residues 147–167 (LTRFIFLESVAGVPGMVGGML). The Fe cation site is built by Glu154, Glu193, and His196. The chain crosses the membrane as a helical span at residues 212–232 (LMVLGAQGVFFNGFFLSYLMS). The Fe cation site is built by Glu244, Glu245, Glu299, and His302. Residues 322–351 (AAKYKDPTKAHPNKGIADLKPTGWEREEVI) form a disordered region.

This sequence belongs to the alternative oxidase family. It depends on Fe cation as a cofactor.

It is found in the mitochondrion inner membrane. Functionally, catalyzes cyanide-resistant oxygen consumption. May increase respiration when the cytochrome respiratory pathway is restricted, or in response to low temperatures. The sequence is that of Alternative oxidase, mitochondrial (aox1) from Aspergillus niger.